Reading from the N-terminus, the 250-residue chain is Coproheme decarboxylase (250 aa).

Residues Arg131, 145 to 149 (YPMNK), His172, and Gln185 each bind Fe-coproporphyrin III. Tyr145 is an active-site residue.

The protein belongs to the ChdC family. Type 1 subfamily. Requires Fe-coproporphyrin III as cofactor.

The enzyme catalyses Fe-coproporphyrin III + 2 H2O2 + 2 H(+) = heme b + 2 CO2 + 4 H2O. The catalysed reaction is Fe-coproporphyrin III + H2O2 + H(+) = harderoheme III + CO2 + 2 H2O. It catalyses the reaction harderoheme III + H2O2 + H(+) = heme b + CO2 + 2 H2O. It participates in porphyrin-containing compound metabolism; protoheme biosynthesis. In terms of biological role, involved in coproporphyrin-dependent heme b biosynthesis. Catalyzes the decarboxylation of Fe-coproporphyrin III (coproheme) to heme b (protoheme IX), the last step of the pathway. The reaction occurs in a stepwise manner with a three-propionate intermediate. In Staphylococcus aureus (strain MSSA476), this protein is Coproheme decarboxylase.